The following is a 697-amino-acid chain: uncharacterized protein (697 aa).

Helical transmembrane passes span 65–85 (PVRNFIEEGCDGVTDLYVGIY), 106–126 (CTFRTNNVKLGYLIVDELHNF), 131–151 (YRQSQFGGITNLDFDAFEKAI), 163–183 (DAALQRIGLTGLAKKSMDINE), 194–214 (LSSYPTRMFNLIKEKSKVPLG), 227–247 (TSATTTASINVRTSATTTASI), 286–306 (STNATTTESTNASAKEDANKD), 316–336 (PVTDINKEPYKRKGSQMVLLE), 361–381 (SDEIKHLFLYGIDIYFCPEGV), 394–414 (MFELCVCWAGQKVSYRRMAWE), 419–439 (ERMLRNDEEYKEYLEDIEPYH), 450–470 (SVKRREIYSQIQRNYAWYLAI), 487–507 (QGSQVFRMSGRQIKELYYKVW), and 558–578 (TSAGLQGPQYVKLQFSRHHRQ). Residues 246-321 (SINVRTSATT…NRFHPVTDIN (76 aa)) form a disordered region. Residues 251–298 (TSATTTESTNSNTNATTTESTNSSTNATTTASTNSSTNATTTESTNAS) show a composition bias toward low complexity. The span at 299-321 (AKEDANKDGNAEDNRFHPVTDIN) shows a compositional bias: basic and acidic residues.

It localises to the membrane. This is an uncharacterized protein from Saccharomyces cerevisiae (strain ATCC 204508 / S288c) (Baker's yeast).